Reading from the N-terminus, the 214-residue chain is ATP-dependent Clp protease proteolytic subunit 2 (214 aa).

Serine 110 serves as the catalytic Nucleophile. Histidine 135 is an active-site residue.

Belongs to the peptidase S14 family. Fourteen ClpP subunits assemble into 2 heptameric rings which stack back to back to give a disk-like structure with a central cavity, resembling the structure of eukaryotic proteasomes.

It localises to the cytoplasm. It carries out the reaction Hydrolysis of proteins to small peptides in the presence of ATP and magnesium. alpha-casein is the usual test substrate. In the absence of ATP, only oligopeptides shorter than five residues are hydrolyzed (such as succinyl-Leu-Tyr-|-NHMec, and Leu-Tyr-Leu-|-Tyr-Trp, in which cleavage of the -Tyr-|-Leu- and -Tyr-|-Trp bonds also occurs).. Cleaves peptides in various proteins in a process that requires ATP hydrolysis. Has a chymotrypsin-like activity. Plays a major role in the degradation of misfolded proteins. The polypeptide is ATP-dependent Clp protease proteolytic subunit 2 (Mycobacterium leprae (strain TN)).